The chain runs to 187 residues: Interferon beta (187 aa).

A signal peptide spans 1 to 21 (MTNKCLLQIALLLCFSTTALS). Tyr24 carries the post-translational modification Phosphotyrosine. A disulfide bond links Cys52 and Cys162. The N-linked (GlcNAc...) asparagine glycan is linked to Asn101.

This sequence belongs to the alpha/beta interferon family. As to quaternary structure, monomer.

The protein localises to the secreted. Type I interferon cytokine that plays a key role in the innate immune response to infection, developing tumors and other inflammatory stimuli. Signals via binding to high-affinity (IFNAR2) and low-affinity (IFNAR1) heterodimeric receptor, activating the canonical Jak-STAT signaling pathway resulting in transcriptional activation or repression of interferon-regulated genes that encode the effectors of the interferon response, such as antiviral proteins, regulators of cell proliferation and differentiation, and immunoregulatory proteins. Signals mostly via binding to a IFNAR1-IFNAR2 heterodimeric receptor, but can also function with IFNAR1 alone and independently of Jak-STAT pathways. Elicits a wide variety of responses, including antiviral and antibacterial activities, and can regulate the development of B-cells, myelopoiesis and lipopolysaccharide (LPS)-inducible production of tumor necrosis factor. Plays a role in neuronal homeostasis by regulating dopamine turnover and protecting dopaminergic neurons: acts by promoting neuronal autophagy and alpha-synuclein clearance, thereby preventing dopaminergic neuron loss. IFNB1 is more potent than interferon-alpha (IFN-alpha) in inducing the apoptotic and antiproliferative pathways required for control of tumor cell growth. The polypeptide is Interferon beta (IFNB1) (Macaca fascicularis (Crab-eating macaque)).